A 1348-amino-acid polypeptide reads, in one-letter code: ABC multidrug transporter atrD (1348 aa).

Positions 1 to 10 (MSPLETNPLS) are enriched in polar residues. The tract at residues 1–67 (MSPLETNPLS…HRPKSSSSNN (67 aa)) is disordered. Low complexity predominate over residues 20–31 (ETSTTEEQASTP). A glycan (N-linked (GlcNAc...) asparagine) is linked at Asn-99. A run of 4 helical transmembrane segments spans residues 114–134 (ILIM…LPLF), 168–188 (YFVY…VGFI), 240–260 (KVGL…IAYV), and 268–288 (ICSS…QFII). The ABC transmembrane type-1 1 domain occupies 118–408 (VISTICAIAA…VSPNAQAFTN (291 aa)). An N-linked (GlcNAc...) asparagine glycan is attached at Asn-314. The next 2 membrane-spanning stretches (helical) occupy residues 344 to 364 (IVMG…YGLG) and 371 to 391 (FLVD…AILI). The ABC transporter 1 domain maps to 443–688 (IELRNVKHIY…GGAYRKLVEA (246 aa)). 478–485 (GPSGSGKS) contacts ATP. Asn-550 carries an N-linked (GlcNAc...) asparagine glycan. 2 helical membrane passes run 778 to 798 (MLIG…QAVL) and 825 to 845 (LMFF…GAAF). An ABC transmembrane type-1 2 domain is found at 779-1068 (LIGLVFSVLA…VFSFAPDMGK (290 aa)). N-linked (GlcNAc...) asparagine glycosylation is present at Asn-877. The next 4 membrane-spanning stretches (helical) occupy residues 892–912 (HLSG…TTLG), 925–947 (LALV…FYML), 1015–1035 (ALVF…LGHH), and 1042–1062 (FFVC…VFSF). The N-linked (GlcNAc...) asparagine glycan is linked to Asn-1088. The 239-residue stretch at 1103–1341 (IEFRNVHFRY…KGRYYELVNL (239 aa)) folds into the ABC transporter 2 domain. 1138 to 1145 (GPSGCGKS) is an ATP binding site.

Belongs to the ABC transporter superfamily. ABCB family. Multidrug resistance exporter (TC 3.A.1.201) subfamily.

It localises to the cell membrane. Its activity is regulated as follows. Fenamirol efflux transporter activity is inhibited by the cyclosporin derivative PSC 833, nigericin, reserpine and valinomycin. The effect of reserpine is transiant, while that of the cyclosporin derivative PSC 833, nigericin and valinomycin is proportional to the time of exposure. Cyclohexinmide has inhibitory effect only when applied prior to addition of the fungicide. Pleiotropic ABC efflux transporter involved in the protection of the cells against a wide range of toxic compounds. Confers resistance to the azole fenarimol via efflux transport. May also be involved in the secretion of penicillin. The chain is ABC multidrug transporter atrD from Emericella nidulans (Aspergillus nidulans).